Consider the following 241-residue polypeptide: Pyridoxine 5'-phosphate synthase (241 aa).

N7 is a binding site for 3-amino-2-oxopropyl phosphate. A 1-deoxy-D-xylulose 5-phosphate-binding site is contributed by 9–10 (DH). R18 is a binding site for 3-amino-2-oxopropyl phosphate. H43 functions as the Proton acceptor in the catalytic mechanism. Residues R45 and H50 each contribute to the 1-deoxy-D-xylulose 5-phosphate site. Catalysis depends on E70, which acts as the Proton acceptor. T100 serves as a coordination point for 1-deoxy-D-xylulose 5-phosphate. H191 serves as the catalytic Proton donor. 3-amino-2-oxopropyl phosphate is bound by residues G192 and 213-214 (GH).

It belongs to the PNP synthase family. Homooctamer; tetramer of dimers.

Its subcellular location is the cytoplasm. The enzyme catalyses 3-amino-2-oxopropyl phosphate + 1-deoxy-D-xylulose 5-phosphate = pyridoxine 5'-phosphate + phosphate + 2 H2O + H(+). Its pathway is cofactor biosynthesis; pyridoxine 5'-phosphate biosynthesis; pyridoxine 5'-phosphate from D-erythrose 4-phosphate: step 5/5. Functionally, catalyzes the complicated ring closure reaction between the two acyclic compounds 1-deoxy-D-xylulose-5-phosphate (DXP) and 3-amino-2-oxopropyl phosphate (1-amino-acetone-3-phosphate or AAP) to form pyridoxine 5'-phosphate (PNP) and inorganic phosphate. In Acidithiobacillus ferrooxidans (strain ATCC 23270 / DSM 14882 / CIP 104768 / NCIMB 8455) (Ferrobacillus ferrooxidans (strain ATCC 23270)), this protein is Pyridoxine 5'-phosphate synthase.